The primary structure comprises 147 residues: Lysozyme C (147 aa).

Residues 1–18 (MKVLLLLGFIFCSMAAHG) form the signal peptide. In terms of domain architecture, C-type lysozyme spans 19-147 (KRMERCEFAR…LSKYLEGCHL (129 aa)). Intrachain disulfides connect Cys-24–Cys-145, Cys-48–Cys-133, Cys-83–Cys-99, and Cys-95–Cys-113. Active-site residues include Glu-53 and Asp-71.

The protein belongs to the glycosyl hydrolase 22 family. Monomer.

It is found in the secreted. The catalysed reaction is Hydrolysis of (1-&gt;4)-beta-linkages between N-acetylmuramic acid and N-acetyl-D-glucosamine residues in a peptidoglycan and between N-acetyl-D-glucosamine residues in chitodextrins.. Its function is as follows. Lysozymes have primarily a bacteriolytic function; those in tissues and body fluids are associated with the monocyte-macrophage system and enhance the activity of immunoagents. The sequence is that of Lysozyme C (LYZ) from Trichosurus vulpecula (Brush-tailed possum).